The sequence spans 67 residues: Amphipathic peptide Tx348 (67 aa).

The first 23 residues, 1–23 (MKSQAFFLLFLVVLLLATTQSEA), serve as a signal peptide directing secretion. Phenylalanine amide is present on Phe33. A propeptide spanning residues 37–67 (SMRNMDTMKYLYDPSLSAADLKTLQKLMENY) is cleaved from the precursor.

The protein belongs to the non-disulfide-bridged peptide (NDBP) superfamily. Short antimicrobial peptide (group 4) family. In terms of tissue distribution, expressed by the venom gland.

It is found in the secreted. The protein localises to the target cell membrane. Its function is as follows. Amphipathic peptide that has antibacterial activities. This is Amphipathic peptide Tx348 from Buthus israelis (Israeli scorpion).